The chain runs to 359 residues: N-acetyl-gamma-glutamyl-phosphate reductase (359 aa).

Residue Cys162 is part of the active site.

The protein belongs to the NAGSA dehydrogenase family. Type 1 subfamily.

The protein localises to the cytoplasm. The enzyme catalyses N-acetyl-L-glutamate 5-semialdehyde + phosphate + NADP(+) = N-acetyl-L-glutamyl 5-phosphate + NADPH + H(+). It functions in the pathway amino-acid biosynthesis; L-arginine biosynthesis; N(2)-acetyl-L-ornithine from L-glutamate: step 3/4. In terms of biological role, catalyzes the NADPH-dependent reduction of N-acetyl-5-glutamyl phosphate to yield N-acetyl-L-glutamate 5-semialdehyde. The sequence is that of N-acetyl-gamma-glutamyl-phosphate reductase from Prochlorococcus marinus (strain SARG / CCMP1375 / SS120).